Reading from the N-terminus, the 349-residue chain is Adenine deaminase (349 aa).

Positions 24, 26, and 204 each coordinate Zn(2+). The active-site Proton donor is glutamate 207. Aspartate 285 contributes to the Zn(2+) binding site. Position 286 (aspartate 286) interacts with substrate.

This sequence belongs to the metallo-dependent hydrolases superfamily. Adenosine and AMP deaminases family. Adenine deaminase type 2 subfamily. Requires Zn(2+) as cofactor.

The catalysed reaction is adenine + H2O + H(+) = hypoxanthine + NH4(+). In terms of biological role, catalyzes the hydrolytic deamination of adenine to hypoxanthine. Plays an important role in the purine salvage pathway and in nitrogen catabolism. The polypeptide is Adenine deaminase (Trichlorobacter lovleyi (strain ATCC BAA-1151 / DSM 17278 / SZ) (Geobacter lovleyi)).